Consider the following 497-residue polypeptide: Serine hydroxymethyltransferase (497 aa).

Residues leucine 176 and 180-182 each bind (6S)-5,6,7,8-tetrahydrofolate; that span reads GHL. Lysine 289 bears the N6-(pyridoxal phosphate)lysine mark.

The protein belongs to the SHMT family. Homodimer. It depends on pyridoxal 5'-phosphate as a cofactor.

It localises to the cytoplasm. The catalysed reaction is (6R)-5,10-methylene-5,6,7,8-tetrahydrofolate + glycine + H2O = (6S)-5,6,7,8-tetrahydrofolate + L-serine. It participates in one-carbon metabolism; tetrahydrofolate interconversion. The protein operates within amino-acid biosynthesis; glycine biosynthesis; glycine from L-serine: step 1/1. Its function is as follows. Catalyzes the reversible interconversion of serine and glycine with tetrahydrofolate (THF) serving as the one-carbon carrier. This reaction serves as the major source of one-carbon groups required for the biosynthesis of purines, thymidylate, methionine, and other important biomolecules. Also exhibits THF-independent aldolase activity toward beta-hydroxyamino acids, producing glycine and aldehydes, via a retro-aldol mechanism. This is Serine hydroxymethyltransferase from Chlamydia felis (strain Fe/C-56) (Chlamydophila felis).